A 344-amino-acid chain; its full sequence is Phosphate acyltransferase (344 aa).

It belongs to the PlsX family. In terms of assembly, homodimer. Probably interacts with PlsY.

It is found in the cytoplasm. It catalyses the reaction a fatty acyl-[ACP] + phosphate = an acyl phosphate + holo-[ACP]. Its pathway is lipid metabolism; phospholipid metabolism. Its function is as follows. Catalyzes the reversible formation of acyl-phosphate (acyl-PO(4)) from acyl-[acyl-carrier-protein] (acyl-ACP). This enzyme utilizes acyl-ACP as fatty acyl donor, but not acyl-CoA. The protein is Phosphate acyltransferase of Paracidovorax citrulli (strain AAC00-1) (Acidovorax citrulli).